The following is a 232-amino-acid chain: Large ribosomal subunit protein uL1 (232 aa).

The protein belongs to the universal ribosomal protein uL1 family. Part of the 50S ribosomal subunit.

In terms of biological role, binds directly to 23S rRNA. The L1 stalk is quite mobile in the ribosome, and is involved in E site tRNA release. Protein L1 is also a translational repressor protein, it controls the translation of the L11 operon by binding to its mRNA. The protein is Large ribosomal subunit protein uL1 of Chlamydia abortus (strain DSM 27085 / S26/3) (Chlamydophila abortus).